We begin with the raw amino-acid sequence, 585 residues long: Probable inactive serine/threonine-protein kinase slob1 (585 aa).

The segment at Asp-21–Glu-82 adopts an FYVE-type zinc-finger fold. Residues Cys-27, Cys-30, Cys-43, Cys-46, Cys-51, Cys-54, Cys-74, and Cys-77 each coordinate Zn(2+). One can recognise a Protein kinase domain in the interval Ser-108–Asn-478. 2 stretches are compositionally biased toward low complexity: residues Ile-426–Ser-456 and Leu-466–Pro-503. Residues Ile-426–Lys-585 form a disordered region. Positions Thr-513–Ser-532 are enriched in pro residues. Residues Ser-533–Ser-542 are compositionally biased toward low complexity. A WH2 domain is found at Ser-542–Thr-562.

This sequence belongs to the protein kinase superfamily. Ser/Thr protein kinase family.

This chain is Probable inactive serine/threonine-protein kinase slob1 (slob1), found in Dictyostelium discoideum (Social amoeba).